The primary structure comprises 491 residues: NADPH:adrenodoxin oxidoreductase, mitochondrial (491 aa).

Residues 1–32 constitute a mitochondrion transit peptide; the sequence is MASRCWRWWGWSAWPRTRLPPAGSTPSFCHHF. Residues alanine 49, glutamate 69, leucine 77, and valine 113 each contribute to the FAD site. NADP(+)-binding positions include 184 to 187, 228 to 229, and glutamate 240; these read QGNV and RR. A phosphoserine mark is found at serine 310 and serine 317. FAD-binding positions include tryptophan 398 and 405-407; that span reads GVI. Glycine 405 is a binding site for NADP(+).

This sequence belongs to the ferredoxin--NADP reductase type 1 family. In terms of assembly, monomer. Interacts directly with FDX1. It depends on FAD as a cofactor.

It is found in the mitochondrion. Its subcellular location is the mitochondrion inner membrane. It catalyses the reaction 2 reduced [adrenodoxin] + NADP(+) + H(+) = 2 oxidized [adrenodoxin] + NADPH. It carries out the reaction 2 reduced [2Fe-2S]-[ferredoxin] + NADP(+) + H(+) = 2 oxidized [2Fe-2S]-[ferredoxin] + NADPH. The protein operates within steroid metabolism; cholesterol metabolism. Functionally, serves as the first electron transfer protein in all the mitochondrial P450 systems including cholesterol side chain cleavage in all steroidogenic tissues, steroid 11-beta hydroxylation in the adrenal cortex, 25-OH-vitamin D3-24 hydroxylation in the kidney, and sterol C-27 hydroxylation in the liver. Also acts as a ferredoxin--NADP(+) reductase essential for coenzyme Q biosynthesis: together with FDX2, transfers the electrons required for the hydroxylation reaction performed by COQ6. The protein is NADPH:adrenodoxin oxidoreductase, mitochondrial of Homo sapiens (Human).